A 207-amino-acid polypeptide reads, in one-letter code: Small ribosomal subunit protein uS4 (207 aa).

The region spanning 97–160 (SRLDNVVYRM…KKQARIVEAL (64 aa)) is the S4 RNA-binding domain.

It belongs to the universal ribosomal protein uS4 family. Part of the 30S ribosomal subunit. Contacts protein S5. The interaction surface between S4 and S5 is involved in control of translational fidelity.

In terms of biological role, one of the primary rRNA binding proteins, it binds directly to 16S rRNA where it nucleates assembly of the body of the 30S subunit. With S5 and S12 plays an important role in translational accuracy. This Burkholderia mallei (strain NCTC 10247) protein is Small ribosomal subunit protein uS4.